A 168-amino-acid chain; its full sequence is Leghemoglobin 5 (168 aa).

The 161-residue stretch at 3–163 (AFTEKQEALV…IAAAIKKAMA (161 aa)) folds into the Globin domain. Serine 63 provides a ligand contact to heme b. Serine 63 carries the phosphoserine modification. An O2-binding site is contributed by histidine 79. 3 residues coordinate heme b: lysine 82, histidine 110, and lysine 113. Tyrosine 151 is subject to Nitrated tyrosine.

The protein belongs to the plant globin family. In terms of assembly, monomer. Post-translationally, nitrated in effective nodules and particularly in hypoxic conditions; this mechanism may play a protective role in the symbiosis by buffering toxic peroxynitrite NO(2)(-). Nitration level decrease during nodule senescence. Phosphorylation at Ser-63 disrupts the molecular environment of its porphyrin ring oxygen binding pocket, thus leading to a reduced oxygen consumption and to the delivery of oxygen O(2) to symbiosomes. In terms of tissue distribution, expressed in root nodules and flowers.

Its subcellular location is the cytoplasm. It localises to the cytosol. The protein localises to the nucleus. Leghemoglobin that reversibly binds oxygen O(2) through a pentacoordinated heme iron. In root nodules, facilitates the diffusion of oxygen to the bacteroids while preventing the bacterial nitrogenase from being inactivated by buffering dioxygen, nitric oxide and carbon monoxide, and promoting the formation of reactive oxygen species (ROS, e.g. H(2)O(2)). This role is essential for symbiotic nitrogen fixation (SNF). Maybe involved in water stress tolerance. In Glycine max (Soybean), this protein is Leghemoglobin 5.